The chain runs to 270 residues: Acyl-[acyl-carrier-protein]--UDP-N-acetylglucosamine O-acyltransferase (270 aa).

This sequence belongs to the transferase hexapeptide repeat family. LpxA subfamily. Homotrimer.

The protein resides in the cytoplasm. The catalysed reaction is a (3R)-hydroxyacyl-[ACP] + UDP-N-acetyl-alpha-D-glucosamine = a UDP-3-O-[(3R)-3-hydroxyacyl]-N-acetyl-alpha-D-glucosamine + holo-[ACP]. Its pathway is glycolipid biosynthesis; lipid IV(A) biosynthesis; lipid IV(A) from (3R)-3-hydroxytetradecanoyl-[acyl-carrier-protein] and UDP-N-acetyl-alpha-D-glucosamine: step 1/6. Involved in the biosynthesis of lipid A, a phosphorylated glycolipid that anchors the lipopolysaccharide to the outer membrane of the cell. The protein is Acyl-[acyl-carrier-protein]--UDP-N-acetylglucosamine O-acyltransferase of Helicobacter pylori (strain G27).